A 220-amino-acid chain; its full sequence is Flavin-dependent thymidylate synthase (220 aa).

The ThyX domain occupies 1–208; sequence MKIDILDKGF…PWTFEAFLKY (208 aa). Residues Thr55, 78–81, and Glu86 contribute to the FAD site; that span reads RHRI. DUMP-binding positions include 75–78, 86–90, and Arg147; these read QWFR and ELSGR. The short motif at 78-88 is the ThyX motif element; the sequence is RHRIASYNELS. FAD contacts are provided by residues 163–165 and Asn169; that span reads NAR. Residue Arg174 coordinates dUMP. The active-site Involved in ionization of N3 of dUMP, leading to its activation is the Arg174.

The protein belongs to the thymidylate synthase ThyX family. Homotetramer. It depends on FAD as a cofactor.

It carries out the reaction dUMP + (6R)-5,10-methylene-5,6,7,8-tetrahydrofolate + NADPH + H(+) = dTMP + (6S)-5,6,7,8-tetrahydrofolate + NADP(+). The catalysed reaction is dUMP + formaldehyde + NADPH + H(+) = dTMP + NADP(+) + H2O. Its pathway is pyrimidine metabolism; dTTP biosynthesis. In terms of biological role, catalyzes the reductive methylation of 2'-deoxyuridine-5'-monophosphate (dUMP or deoxyuridylate) to 2'-deoxythymidine-5'-monophosphate (dTMP or deoxythymidylate) while utilizing 5,10-methylenetetrahydrofolate (mTHF) as the methylene donor, and NAD(P)H and FADH(2) as the reductant. This reaction is a critical step in DNA biosynthesis. Can also use formaldehyde instead of mTHF as a direct methylene donor for dTMP synthesis. However, the tighter binding of ThyX to mTHF (KD of 4 uM) compared to formaldehyde (KD of 20 mM) confirms that methylene tetrahydrofolate acts as the biological carbon donor for ThyX, serving as a formaldehyde carrier/transporter and thus avoiding genotoxic effects. This chain is Flavin-dependent thymidylate synthase, found in Thermotoga maritima (strain ATCC 43589 / DSM 3109 / JCM 10099 / NBRC 100826 / MSB8).